Here is a 398-residue protein sequence, read N- to C-terminus: Cytochrome b (398 aa).

4 helical membrane-spanning segments follow: residues 38–58 (FGSL…FLAM), 82–104 (WLLR…LHIF), 119–139 (VWCL…IGYV), and 185–205 (FFSL…LHLA). The heme b site is built by His-88 and His-102. Heme b-binding residues include His-189 and His-203. His-208 is an a ubiquinone binding site. 4 consecutive transmembrane segments (helical) span residues 231–251 (FYVK…IWIF), 295–315 (AGGV…PFFK), 327–347 (IYQG…WIGC), and 354–373 (FVTI…AITP).

It belongs to the cytochrome b family. In terms of assembly, the main subunits of complex b-c1 are: cytochrome b, cytochrome c1 and the Rieske protein. Heme b serves as cofactor.

It localises to the mitochondrion inner membrane. Functionally, component of the ubiquinol-cytochrome c reductase complex (complex III or cytochrome b-c1 complex) that is part of the mitochondrial respiratory chain. The b-c1 complex mediates electron transfer from ubiquinol to cytochrome c. Contributes to the generation of a proton gradient across the mitochondrial membrane that is then used for ATP synthesis. In Triticum aestivum (Wheat), this protein is Cytochrome b (MT-CYB).